The primary structure comprises 360 residues: Inward rectifier potassium channel 13 (360 aa).

Residues 1 to 50 lie on the Cytoplasmic side of the membrane; that stretch reads MDSRNCKVNAPLLSQRYRRMVTKDGHSTLQMDGAQRGLVYLRDAWGILMD. Residues 51 to 77 form a helical membrane-spanning segment; the sequence is MRWRWMMLVFSASFVVHWLVFAVLWYA. Over 78–105 the chain is Extracellular; that stretch reads VAEMNGDLEIDHDVPPENHTICVKHITS. The helical; Pore-forming intramembrane region spans 106 to 122; that stretch reads FTAAFSFSLETQLTIGY. A Selectivity filter motif is present at residues 119 to 124; the sequence is TIGYGT. Topologically, residues 123-131 are extracellular; sequence GTMFPSGDC. Residues 132 to 157 traverse the membrane as a helical segment; that stretch reads PSAIALLAIQMLLGLMLEAFITGAFV. At 158 to 360 the chain is on the cytoplasmic side; it reads AKIARPKNRA…FQIAETGLTE (203 aa). Residue Ser-201 is modified to Phosphoserine; by PKC. The residue at position 287 (Ser-287) is a Phosphoserine; by PKA.

Belongs to the inward rectifier-type potassium channel (TC 1.A.2.1) family. KCNJ13 subfamily. In terms of assembly, homotetramer. Interacts with RAB28; the interaction may facilitate cone outer segments phagocytosis. Phosphorylation at Ser-201 by PKC strongly inhibits ionic currents, while phosphorylation at Ser-287 by PKA increases them.

The protein localises to the membrane. It is found in the cell membrane. It catalyses the reaction K(+)(in) = K(+)(out). Its activity is regulated as follows. Inhibited by Ba(2+) and Cs(+), although sensitivity to those inhibitors is much lower than in other Kir channels. Inward rectifier potassium channels are characterized by a greater tendency to allow potassium to flow into the cell rather than out of it. Their voltage dependence is regulated by the concentration of extracellular potassium; as external potassium is raised, the voltage range of the channel opening shifts to more positive voltages. The inward rectification is mainly due to the blockage of outward current by internal magnesium. KCNJ13 has a very low single channel conductance, low sensitivity to block by external barium and cesium, and no dependence of its inward rectification properties on the internal blocking particle magnesium. The protein is Inward rectifier potassium channel 13 (Kcnj13) of Rattus norvegicus (Rat).